A 179-amino-acid polypeptide reads, in one-letter code: MAFLASGPYLTHQQKVLRLYKRALRHLESWCVQRDKYRYFACLMRARFEEHKNEKDMAKATQLLKEAEEEFWYRQHPQPYIFPDSPGGTSYERYDCYKVPEWCLDDWHPSEKAMYPDYFAKREQWKKLRRESWEREVKQLQEETPPGGPLTEALPPARKEGDLPPLWWYIVTRPRERPM.

Residue A2 is modified to N-acetylalanine. S85 is subject to Phosphoserine. Residues 136–162 are disordered; it reads EVKQLQEETPPGGPLTEALPPARKEGD.

Belongs to the complex I LYR family. Mammalian complex I is composed of 45 different subunits.

The protein resides in the mitochondrion inner membrane. Accessory subunit of the mitochondrial membrane respiratory chain NADH dehydrogenase (Complex I), that is believed to be not involved in catalysis. Complex I functions in the transfer of electrons from NADH to the respiratory chain. The immediate electron acceptor for the enzyme is believed to be ubiquinone. The sequence is that of NADH dehydrogenase [ubiquinone] 1 beta subcomplex subunit 9 (NDUFB9) from Homo sapiens (Human).